Here is a 189-residue protein sequence, read N- to C-terminus: Pyridoxal 5'-phosphate synthase subunit PdxT (189 aa).

An L-glutamine-binding site is contributed by 46-48 (GES). The active-site Nucleophile is the Cys78. Residues Arg107 and 136–137 (IR) each bind L-glutamine. Residues His173 and Glu175 each act as charge relay system in the active site.

This sequence belongs to the glutaminase PdxT/SNO family. As to quaternary structure, in the presence of PdxS, forms a dodecamer of heterodimers. Only shows activity in the heterodimer.

It carries out the reaction aldehydo-D-ribose 5-phosphate + D-glyceraldehyde 3-phosphate + L-glutamine = pyridoxal 5'-phosphate + L-glutamate + phosphate + 3 H2O + H(+). The catalysed reaction is L-glutamine + H2O = L-glutamate + NH4(+). The protein operates within cofactor biosynthesis; pyridoxal 5'-phosphate biosynthesis. Its function is as follows. Catalyzes the hydrolysis of glutamine to glutamate and ammonia as part of the biosynthesis of pyridoxal 5'-phosphate. The resulting ammonia molecule is channeled to the active site of PdxS. This is Pyridoxal 5'-phosphate synthase subunit PdxT from Roseiflexus sp. (strain RS-1).